The chain runs to 66 residues: ATP synthase protein 8 (66 aa).

A helical transmembrane segment spans residues 8 to 24; that stretch reads TWLMMIMSMFLALFIIF. Position 54 is an N6-acetyllysine; alternate (Lys54). An N6-succinyllysine; alternate modification is found at Lys54. Lys57 is subject to N6-acetyllysine.

It belongs to the ATPase protein 8 family. As to quaternary structure, F-type ATPases have 2 components, CF(1) - the catalytic core - and CF(0) - the membrane proton channel. Component of an ATP synthase complex composed of ATP5PB, ATP5MC1, ATP5F1E, ATP5PD, ATP5ME, ATP5PF, ATP5MF, MT-ATP6, MT-ATP8, ATP5F1A, ATP5F1B, ATP5F1D, ATP5F1C, ATP5PO, ATP5MG, ATP5MK and ATP5MJ. Interacts with PRICKLE3.

It localises to the mitochondrion membrane. Its function is as follows. Mitochondrial membrane ATP synthase (F(1)F(0) ATP synthase or Complex V) produces ATP from ADP in the presence of a proton gradient across the membrane which is generated by electron transport complexes of the respiratory chain. F-type ATPases consist of two structural domains, F(1) - containing the extramembraneous catalytic core and F(0) - containing the membrane proton channel, linked together by a central stalk and a peripheral stalk. During catalysis, ATP synthesis in the catalytic domain of F(1) is coupled via a rotary mechanism of the central stalk subunits to proton translocation. Part of the complex F(0) domain. Minor subunit located with subunit a in the membrane. In Cervus elaphus hippelaphus (European red deer), this protein is ATP synthase protein 8 (MT-ATP8).